Consider the following 86-residue polypeptide: Cell division topological specificity factor (86 aa).

This sequence belongs to the MinE family.

In terms of biological role, prevents the cell division inhibition by proteins MinC and MinD at internal division sites while permitting inhibition at polar sites. This ensures cell division at the proper site by restricting the formation of a division septum at the midpoint of the long axis of the cell. This is Cell division topological specificity factor from Stenotrophomonas maltophilia (strain R551-3).